Consider the following 317-residue polypeptide: Ribosomal RNA small subunit methyltransferase H (317 aa).

S-adenosyl-L-methionine contacts are provided by residues 34–36 (GGH), Asp-53, Phe-80, Asp-98, and Gln-105.

It belongs to the methyltransferase superfamily. RsmH family.

Its subcellular location is the cytoplasm. The enzyme catalyses cytidine(1402) in 16S rRNA + S-adenosyl-L-methionine = N(4)-methylcytidine(1402) in 16S rRNA + S-adenosyl-L-homocysteine + H(+). Its function is as follows. Specifically methylates the N4 position of cytidine in position 1402 (C1402) of 16S rRNA. This Tropheryma whipplei (strain TW08/27) (Whipple's bacillus) protein is Ribosomal RNA small subunit methyltransferase H.